The following is a 438-amino-acid chain: Prenyltransferase malE (438 aa).

Position 92 (glutamate 92) interacts with substrate. Arginine 106, lysine 192, tyrosine 194, lysine 259, tyrosine 261, tyrosine 346, and tyrosine 411 together coordinate dimethylallyl diphosphate.

The protein belongs to the tryptophan dimethylallyltransferase family.

The catalysed reaction is (S)-3-(indol-3-ylmethyl)-6,7,8,8a-tetrahydropyrrolo[1,2-a]pyrazin-1-one + dimethylallyl diphosphate = (S)-3-{[2-(1,1-dimethylallyl)-indol-3-yl]methyl}-6,7,8,8a-tetrahydropyrrolo[1,2-a]pyrazin-1-one + diphosphate. It carries out the reaction 1-hydroxy-3-(indol-3-ylmethyl)-6H,7H,8H-5lambda(5)-pyrrolo[1,2-a]pyrazine + dimethylallyl diphosphate = 1-hydroxy-3-{[2-(1,1-dimethylallyl)-indol-3-yl]methyl}-6H,7H,8H-5lambda(5)-pyrrolo[1,2-a]pyrazine + diphosphate. Its pathway is alkaloid biosynthesis. Prenyltransferase; part of the gene cluster that mediates the biosynthesis of malbrancheamide, a dichlorinated fungal indole alkaloid that belongs to a family of natural products containing a characteristic bicyclo[2.2.2]diazaoctane core. The first step of malbrancheamide biosynthesis involves coupling of L-proline and L-tryptophan by malG, a bimodular NRPS, to produce L-Pro-L-Trp aldehyde through reductive offloading. This compound undergoes spontaneous cyclization and dehydration to give a dienamine which is reverse prenylated at C-2 by malE. The other prenyltransferase present in the cluster, malB, displays modest activity, suggesting that may be a redundant gene in the pathway. Subsequently, a [4+2] Diels-Alder cyclo-addition catalyzed by the bifunctional enzyme malC forms the characteristic bicyclo[2.2.2]diazaoctane ring of premalbrancheamid. Finally, the flavin-dependent halogenase malA catalyzes the iterative dichlorination of the indole ring of premalbrancheamide to yield C-9 monochlorinated malbrancheamide B, C-8 monochlorinated isomalbrancheamide B, and dichlorinated malbrancheamide. MalA is also able to brominate premalbrancheamide at C-9 to yield malbrancheamide C, and, to a lesser extend, at C-8 to yield isomalbrancheamide C. Finally, malA can brominate C-9 monochlorinated malbrancheamide B at C-8 to yield malbrancheamide D, or C-8 monochlorinated isomalbrancheamide B at C-9 to produce isomalbrancheamide D. The protein is Prenyltransferase malE of Malbranchea aurantiaca.